Reading from the N-terminus, the 300-residue chain is Heme A synthase (300 aa).

The Cytoplasmic segment spans residues 1 to 8; sequence MLKEKNLK. A helical transmembrane segment spans residues 9-29; that stretch reads WLSLFTTVLMLFVQIGGALVT. The Extracellular segment spans residues 30-64; sequence KTGSADGCGSSWPLCHGKFVPTHIPKETLIELAHR. Cysteines 37 and 44 form a disulfide. The active site involves Glu-60. His-63 serves as a coordination point for heme o. Residues 65 to 85 traverse the membrane as a helical segment; the sequence is GVSGLALLSVTWLVILSIKYI. The Cytoplasmic portion of the chain corresponds to 86–92; it reads GHKKETK. Residues 93–113 form a helical membrane-spanning segment; that stretch reads FLCYMSIGFIFAQALIGAAAV. Over 114–123 the chain is Extracellular; it reads MWQQNGFVLA. Residues 124 to 144 form a helical membrane-spanning segment; sequence LHFGISLISFSAVFLLTLLIF. His-125 lines the heme o pocket. Topologically, residues 145–163 are cytoplasmic; that stretch reads EVDQKFDATKLILQPKLRR. The helical transmembrane segment at 164–184 threads the bilayer; it reads HTIGLTSFIYFVIYSGALVRH. Over 185 to 218 the chain is Extracellular; it reads EKASLACSSWPLCRKGAFILPQNFYEWVQMSHRT. Cys-191 and Cys-197 form a disulfide bridge. Heme b is bound at residue His-216. Residues 219–239 form a helical membrane-spanning segment; the sequence is LAFILFIWLTYVAFHAMRNYA. The Cytoplasmic portion of the chain corresponds to 240–249; that stretch reads QYRVIKYGYM. A helical transmembrane segment spans residues 250-270; that stretch reads IAFILICLQVTTGALTIFTAV. Topologically, residues 271–275 are extracellular; sequence NLYIA. A helical transmembrane segment spans residues 276 to 296; that stretch reads LLHALFITLLFGLLCYFILLI. His-278 provides a ligand contact to heme b. The Cytoplasmic portion of the chain corresponds to 297-300; the sequence is SRAK.

The protein belongs to the COX15/CtaA family. Type 1 subfamily. In terms of assembly, interacts with CtaB. It depends on heme b as a cofactor.

The protein localises to the cell membrane. It catalyses the reaction Fe(II)-heme o + 2 A + H2O = Fe(II)-heme a + 2 AH2. It participates in porphyrin-containing compound metabolism; heme A biosynthesis; heme A from heme O: step 1/1. Its function is as follows. Catalyzes the conversion of heme O to heme A by two successive hydroxylations of the methyl group at C8. The first hydroxylation forms heme I, the second hydroxylation results in an unstable dihydroxymethyl group, which spontaneously dehydrates, resulting in the formyl group of heme A. The protein is Heme A synthase of Macrococcus caseolyticus (strain JCSC5402) (Macrococcoides caseolyticum).